The sequence spans 387 residues: uncharacterized protein (387 aa).

The protein resides in the virion. This is an uncharacterized protein from Acanthamoeba polyphaga (Amoeba).